A 365-amino-acid chain; its full sequence is 2'-hydroxybiphenyl-2-sulfinate desulfinase (365 aa).

Cys-27 is an active-site residue. 3 residues coordinate 2'-hydroxybiphenyl-2-sulfinate: Cys-27, His-60, and Arg-70. Residue Arg-70 is part of the active site.

This sequence belongs to the DszB desulfinase family. Monomer.

It localises to the cytoplasm. The catalysed reaction is 2'-hydroxybiphenyl-2-sulfinate + H2O = biphenyl-2-ol + sulfite + H(+). Its pathway is sulfur metabolism; dibenzothiophene degradation. Its function is as follows. Catalyzes the third and final step of the '4S' desulfurization pathway that removes covalently bound sulfur from dibenzothiophene (DBT) without breaking carbon-carbon bonds. Oxidizes 2-(2'-hydroxyphenyl)benzene sulphinate (HBPS) to 2-hydroxybiphenyl (HBP) plus sulfite. The rate-limiting step of the '4S' desulfurization pathway. This Rhodococcus erythropolis (Arthrobacter picolinophilus) protein is 2'-hydroxybiphenyl-2-sulfinate desulfinase.